Consider the following 357-residue polypeptide: Probable cinnamyl alcohol dehydrogenase 7/8 (357 aa).

Cysteine 47 is a binding site for Zn(2+). Serine 49 contributes to the NADP(+) binding site. Residues histidine 69, glutamate 70, cysteine 100, cysteine 103, cysteine 106, cysteine 114, and cysteine 163 each contribute to the Zn(2+) site. Residues threonine 167, 188-193 (GLGGVG), 211-216 (SSSDKK), threonine 251, glycine 275, and 298-300 (SFI) each bind NADP(+).

This sequence belongs to the zinc-containing alcohol dehydrogenase family. As to quaternary structure, homodimer. The cofactor is Zn(2+).

It catalyses the reaction (E)-cinnamyl alcohol + NADP(+) = (E)-cinnamaldehyde + NADPH + H(+). The enzyme catalyses (E)-coniferol + NADP(+) = (E)-coniferaldehyde + NADPH + H(+). The catalysed reaction is (E)-sinapyl alcohol + NADP(+) = (E)-sinapaldehyde + NADPH + H(+). It carries out the reaction (E)-4-coumaroyl alcohol + NADP(+) = (E)-4-coumaraldehyde + NADPH + H(+). It catalyses the reaction (E)-caffeyl alcohol + NADP(+) = (E)-caffeyl aldehyde + NADPH + H(+). It participates in aromatic compound metabolism; phenylpropanoid biosynthesis. Its function is as follows. Involved in lignin biosynthesis. Catalyzes the final step specific for the production of lignin monomers. Catalyzes the NADPH-dependent reduction of coniferaldehyde, 5-hydroxyconiferaldehyde, sinapaldehyde, 4-coumaraldehyde and caffeyl aldehyde to their respective alcohols. The polypeptide is Probable cinnamyl alcohol dehydrogenase 7/8 (CAD7) (Picea abies (Norway spruce)).